Consider the following 411-residue polypeptide: 6-hydroxytryprostatin B O-methyltransferase (411 aa).

Residue D270 participates in S-adenosyl-L-methionine binding. H313 acts as the Proton acceptor in catalysis.

It belongs to the class I-like SAM-binding methyltransferase superfamily. Cation-independent O-methyltransferase family. Homodimer.

The catalysed reaction is 6-hydroxytryprostatin B + S-adenosyl-L-methionine = tryprostatin A + S-adenosyl-L-homocysteine + H(+). Its pathway is alkaloid biosynthesis. 6-hydroxytryprostatin B O-methyltransferase; part of the gene cluster that mediates the biosynthesis of fumitremorgins, indole alkaloids that carry not only intriguing chemical structures, but also interesting biological and pharmacological activities. The biosynthesis of fumitremorgin-type alkaloids begins by condensation of the two amino acids L-tryptophan and L-proline to brevianamide F, catalyzed by the non-ribosomal peptide synthetase ftmPS/ftmA. Brevianamide F is then prenylated by the prenyltransferase ftmPT1/ftmB in the presence of dimethylallyl diphosphate, resulting in the formation of tryprostatin B. The three cytochrome P450 monooxygenases, ftmP450-1/ftmC, ftmP450-2/ftmE and ftmP450-3/FtmG, are responsible for the conversion of tryprostatin B to 6-hydroxytryprostatin B, tryprostatin A to fumitremorgin C and fumitremorgin C to 12,13-dihydroxyfumitremorgin C, respectively. The putative methyltransferase ftmMT/ftmD is expected for the conversion of 6-hydroxytryprostatin B to tryprostatin A. FtmPT2/FtmH catalyzes the prenylation of 12,13-dihydroxyfumitre-morgin C in the presence of dimethylallyl diphosphate, resulting in the formation of fumitremorgin B. Fumitremorgin B is further converted to verruculogen by ftmOx1/ftmF via the insertion of an endoperoxide bond between the two prenyl moieties. Finally, verruculogen is further converted to fumitremorgin A by the verruculogen prenyltransferase ftmPT3. The polypeptide is 6-hydroxytryprostatin B O-methyltransferase (Neosartorya fischeri (strain ATCC 1020 / DSM 3700 / CBS 544.65 / FGSC A1164 / JCM 1740 / NRRL 181 / WB 181) (Aspergillus fischerianus)).